Here is a 325-residue protein sequence, read N- to C-terminus: MLTRFKKQNNKMVRANIVSMVLLMHAIVGFPFHARGLSMTYYMMSCPFAEQIVKNSVNNALQADPTLAAGLIRMLFHDCFIEGCDASILLDSTKDNTAEKDSPANLSLRGYEIIDDAKEKIENRCPGVVSCADIVAMAARDAVFWAGGPYYDIPKGRFDGKRSKIEDTRNLPSPFLNASQLIQTFGQRGFTPQDVVALSGAHTLGVARCSSFKARLTVPDSSLDSTFANTLSKTCSAGDNAEQPFDATRNDFDNAYFNALQMKSGVLFSDQTLFNTPRTRNLVNGYALNQAKFFFDFQQAMRKMSNLDVKLGSQGEVRQNCRSIN.

The N-terminal stretch at M1–G36 is a signal peptide. Intrachain disulfides connect C46/C125, C79/C84, C131/C321, and C209/C235. H77 serves as the catalytic Proton acceptor. Positions 78, 83, 85, and 87 each coordinate Ca(2+). P172 is a substrate binding site. Residue N177 is glycosylated (N-linked (GlcNAc...) asparagine). H202 is a binding site for heme b. T203 contacts Ca(2+). The Ca(2+) site is built by D246, T248, and D253.

Belongs to the peroxidase family. Classical plant (class III) peroxidase subfamily. Requires heme b as cofactor. Ca(2+) is required as a cofactor.

It localises to the secreted. It catalyses the reaction 2 a phenolic donor + H2O2 = 2 a phenolic radical donor + 2 H2O. Functionally, removal of H(2)O(2), oxidation of toxic reductants, biosynthesis and degradation of lignin, suberization, auxin catabolism, response to environmental stresses such as wounding, pathogen attack and oxidative stress. These functions might be dependent on each isozyme/isoform in each plant tissue. The protein is Peroxidase 47 (PER47) of Arabidopsis thaliana (Mouse-ear cress).